The chain runs to 242 residues: Small ribosomal subunit protein uS2 (242 aa).

It belongs to the universal ribosomal protein uS2 family.

The chain is Small ribosomal subunit protein uS2 from Shewanella putrefaciens (strain CN-32 / ATCC BAA-453).